The chain runs to 158 residues: Transcription elongation factor GreA (158 aa).

A coiled-coil region spans residues Thr-8–Thr-74.

The protein belongs to the GreA/GreB family.

Its function is as follows. Necessary for efficient RNA polymerase transcription elongation past template-encoded arresting sites. The arresting sites in DNA have the property of trapping a certain fraction of elongating RNA polymerases that pass through, resulting in locked ternary complexes. Cleavage of the nascent transcript by cleavage factors such as GreA or GreB allows the resumption of elongation from the new 3'terminus. GreA releases sequences of 2 to 3 nucleotides. This Chloroherpeton thalassium (strain ATCC 35110 / GB-78) protein is Transcription elongation factor GreA.